The primary structure comprises 200 residues: Small ribosomal subunit protein uS4 (200 aa).

Residues 22-43 are disordered; it reads TGKELQKRPYPPGQHGPSQRRK. The S4 RNA-binding domain maps to 92-152; the sequence is SRLDNLVYRL…EKSRNLQVIK (61 aa).

The protein belongs to the universal ribosomal protein uS4 family. Part of the 30S ribosomal subunit. Contacts protein S5. The interaction surface between S4 and S5 is involved in control of translational fidelity.

In terms of biological role, one of the primary rRNA binding proteins, it binds directly to 16S rRNA where it nucleates assembly of the body of the 30S subunit. Its function is as follows. With S5 and S12 plays an important role in translational accuracy. The protein is Small ribosomal subunit protein uS4 of Geobacillus sp. (strain WCH70).